The primary structure comprises 181 residues: Probable nicotinate-nucleotide adenylyltransferase (181 aa).

It belongs to the NadD family.

The enzyme catalyses nicotinate beta-D-ribonucleotide + ATP + H(+) = deamido-NAD(+) + diphosphate. It functions in the pathway cofactor biosynthesis; NAD(+) biosynthesis; deamido-NAD(+) from nicotinate D-ribonucleotide: step 1/1. Functionally, catalyzes the reversible adenylation of nicotinate mononucleotide (NaMN) to nicotinic acid adenine dinucleotide (NaAD). In Campylobacter jejuni subsp. jejuni serotype O:23/36 (strain 81-176), this protein is Probable nicotinate-nucleotide adenylyltransferase.